We begin with the raw amino-acid sequence, 687 residues long: Ribonuclease E (687 aa).

Residues 35–117 enclose the S1 motif domain; it reads GDIYLGVVEN…LTGNITLPGR (83 aa). 2 residues coordinate Mg(2+): D296 and D339. The Zn(2+) site is built by C397 and C400. Positions 650 to 687 are disordered; that stretch reads PIKLTETMEESEVNAASTANRRRRRRSSASDSDTGEDS. A C4 Arg-rich motif, necessary and sufficient to confer PNPase binding on another protein motif is present at residues 670 to 678; it reads RRRRRRSSA.

It belongs to the RNase E/G family. In terms of assembly, may form homodimers or higher order multimers. Interacts with polynucleotide phosphorylase (PNPase, pnp) via the C4 Arg-rich motif (residues 670-678). A homotetramer formed by a dimer of dimers. The cofactor is Mg(2+). Zn(2+) is required as a cofactor.

It is found in the cytoplasm. It catalyses the reaction Endonucleolytic cleavage of single-stranded RNA in A- and U-rich regions.. Functionally, endoribonuclease that plays a central role in rRNA and tRNA processing and mRNA decay. Has been shown to act on 9S rRNA (the precursor of 5S rRNA). This is Ribonuclease E from Nostoc sp. (strain PCC 7120 / SAG 25.82 / UTEX 2576).